The chain runs to 3291 residues: Protocadherin-16 (3291 aa).

The first 35 residues, 1–35 (MQKELSVALSCPGMKSLRTLLPLLVLLGATVPGSW), serve as a signal peptide directing secretion. At 36–2933 (GQAGSLDLQI…PDLNLLLVGA (2898 aa)) the chain is on the extracellular side. Cadherin domains follow at residues 37 to 137 (QAGS…APAF), 138 to 249 (PQAR…APAF), 250 to 356 (NQSR…QPSM), 369 to 466 (VSEA…APAF), 476 to 572 (LPEV…EPQF), 573 to 679 (QRTF…PPQF), 680 to 784 (YPRE…PPIF), 785 to 888 (EQLQ…SPAF), 889 to 994 (PAPE…APRF), 995 to 1105 (DSPT…EPTF), 1100 to 1205 (SEEP…SPTF), 1218 to 1317 (IQVP…SPDL), 1326 to 1429 (VPVV…APTF), 1430 to 1539 (ARDP…APVF), 1539 to 1642 (FASP…APAF), 1643 to 1744 (PQQE…TPTF), 1745 to 1848 (GNTH…APVF), 1849 to 1953 (PVPS…APAF), 1976 to 2061 (LATL…GPRF), 2062 to 2164 (PRTS…APRF), 2165 to 2270 (LRPH…RPTI), 2270 to 2369 (IPQP…VPTF), 2370 to 2475 (SQSL…APSF), 2476 to 2595 (TLPH…PPVF), 2596 to 2699 (TRAS…GPAF), 2700 to 2806 (PLSL…DPVF), and 2807 to 2926 (LAPS…APDL). A glycan (N-linked (GlcNAc...) asparagine) is linked at N396. An N-linked (GlcNAc...) asparagine glycan is attached at N2354. Residues 2867-2886 (SRAPGSGTTTSGGGGRTRRE) are disordered. The chain crosses the membrane as a helical span at residues 2934–2954 (VAASLGVVVVLALAALVLGLV). The Cytoplasmic portion of the chain corresponds to 2955-3291 (RARSRKAEAA…EPPDDTELRI (337 aa)). Positions 2978-3033 (SLQKLGREPPSPPPSEHLYHQTLPSYGGPGAGGPYPRGGSLDPSHSSGRGSAEAAE) are disordered. The span at 3004–3013 (GGPGAGGPYP) shows a compositional bias: gly residues. A Phosphoserine modification is found at S3048. Disordered regions lie at residues 3051–3081 (SSLA…APDT) and 3226–3291 (ASHR…ELRI). Positions 3237–3259 (SLSSAAMSPSFSPSLSPLAARSP) are enriched in low complexity. Residues 3270 to 3279 (PSASALSTES) show a composition bias toward polar residues.

In terms of assembly, heterophilic interaction with FAT4; this interaction affects their respective protein levels. In terms of tissue distribution, expressed in the epicardium and atrioventricular sulcus (at protein level).

The protein localises to the cell membrane. Calcium-dependent cell-adhesion protein. Mediates functions in neuroprogenitor cell proliferation and differentiation. In the heart, has a critical role for proper morphogenesis of the mitral valve, acting in the regulation of cell migration involved in valve formation. The polypeptide is Protocadherin-16 (Dchs1) (Mus musculus (Mouse)).